We begin with the raw amino-acid sequence, 78 residues long: Esculentin-2Vb (78 aa).

Positions 1-22 (MFTMKKSLLLLFFLGTISLSLC) are cleaved as a signal peptide. A propeptide spanning residues 23–39 (EEERGADEEEGDGEKLM) is cleaved from the precursor. A disulfide bridge links Cys72 with Cys78.

In terms of tissue distribution, expressed by the skin glands.

It is found in the secreted. Antimicrobial peptide. This is Esculentin-2Vb from Odorrana versabilis (Chinese bamboo leaf odorous frog).